The primary structure comprises 339 residues: Alcohol dehydrogenase notN (339 aa).

Zn(2+) is bound by residues cysteine 44, histidine 65, glutamate 66, cysteine 99, cysteine 102, cysteine 110, and cysteine 152. An an alcohol-binding site is contributed by histidine 65. NAD(+) is bound by residues 176 to 181 (GLGGLG), 196 to 201 (VAISRG), lysine 204, 263 to 265 (LSF), 287 to 289 (PSG), and 295 to 297 (EDA).

Belongs to the zinc-containing alcohol dehydrogenase family. Zn(2+) is required as a cofactor.

It carries out the reaction a primary alcohol + NAD(+) = an aldehyde + NADH + H(+). The enzyme catalyses a secondary alcohol + NAD(+) = a ketone + NADH + H(+). In terms of biological role, alcohol dehydrogenase; part of the gene cluster that mediates the biosynthesis of notoamide, a fungal indole alkaloid that belongs to a family of natural products containing a characteristic bicyclo[2.2.2]diazaoctane core. The first step of notoamide biosynthesis involves coupling of L-proline and L-tryptophan by the bimodular NRPS notE, to produce cyclo-L-tryptophan-L-proline called brevianamide F. The reverse prenyltransferase notF then acts as a deoxybrevianamide E synthase and converts brevianamide F to deoxybrevianamide E via reverse prenylation at C-2 of the indole ring leading to the bicyclo[2.2.2]diazaoctane core. Deoxybrevianamide E is further hydroxylated at C-6 of the indole ring, likely catalyzed by the cytochrome P450 monooxygenase notG, to yield 6-hydroxy-deoxybrevianamide E. 6-hydroxy-deoxybrevianamide E is a specific substrate of the prenyltransferase notC for normal prenylation at C-7 to produce 6-hydroxy-7-prenyl-deoxybrevianamide, also called notoamide S. As the proposed pivotal branching point in notoamide biosynthesis, notoamide S can be diverted to notoamide E through an oxidative pyran ring closure putatively catalyzed by either notH cytochrome P450 monooxygenase or the notD FAD-linked oxidoreductase. This step would be followed by an indole 2,3-epoxidation-initiated pinacol-like rearrangement catalyzed by the notB FAD-dependent monooxygenase leading to the formation of notoamide C and notoamide D. On the other hand notoamide S is converted to notoamide T by notH (or notD), a bifunctional oxidase that also functions as the intramolecular Diels-Alderase responsible for generation of (+)-notoamide T. To generate antipodal (-)-notoaminide T, notH' (or notD') in Aspergillus versicolor is expected to catalyze a Diels-Alder reaction leading to the opposite stereochemistry. The remaining oxidoreductase notD (or notH) likely catalyzes the oxidative pyran ring formation to yield (+)-stephacidin A. The FAD-dependent monooxygenase notI is highly similar to notB and is predicted to catalyze a similar conversion from (+)-stephacidin A to (-)-notoamide B via the 2,3-epoxidation of (+)-stephacidin A followed by a pinacol-type rearrangement. Finally, it remains unclear which enzyme could be responsible for the final hydroxylation steps leading to notoamide A and sclerotiamide. The function of notN in the notoamide biosynthesis has not been determined yet. The polypeptide is Alcohol dehydrogenase notN (Aspergillus sp. (strain MF297-2)).